The chain runs to 364 residues: UDP-N-acetylenolpyruvoylglucosamine reductase (364 aa).

Positions 30 to 196 (LGGPATRLIT…LRVRFELEDA (167 aa)) constitute an FAD-binding PCMH-type domain. Residue Arg173 is part of the active site. Ser252 functions as the Proton donor in the catalytic mechanism. Residue Glu356 is part of the active site.

The protein belongs to the MurB family. The cofactor is FAD.

The protein localises to the cytoplasm. It catalyses the reaction UDP-N-acetyl-alpha-D-muramate + NADP(+) = UDP-N-acetyl-3-O-(1-carboxyvinyl)-alpha-D-glucosamine + NADPH + H(+). It participates in cell wall biogenesis; peptidoglycan biosynthesis. In terms of biological role, cell wall formation. The polypeptide is UDP-N-acetylenolpyruvoylglucosamine reductase (Streptomyces avermitilis (strain ATCC 31267 / DSM 46492 / JCM 5070 / NBRC 14893 / NCIMB 12804 / NRRL 8165 / MA-4680)).